A 378-amino-acid chain; its full sequence is Carbamoyl phosphate synthase small chain (378 aa).

Positions 1 to 188 are CPSase; that stretch reads MLPSFPPAIL…LGRGYGVQDK (188 aa). L-glutamine contacts are provided by Ser50, Gly240, and Gly242. The Glutamine amidotransferase type-1 domain maps to 192-378; it reads HVVAYDFGVK…FTAAMAERKQ (187 aa). The Nucleophile role is filled by Cys268. 5 residues coordinate L-glutamine: Leu269, Gln272, Asn310, Gly312, and Phe313. Residues His352 and Glu354 contribute to the active site.

Belongs to the CarA family. Composed of two chains; the small (or glutamine) chain promotes the hydrolysis of glutamine to ammonia, which is used by the large (or ammonia) chain to synthesize carbamoyl phosphate. Tetramer of heterodimers (alpha,beta)4.

The enzyme catalyses hydrogencarbonate + L-glutamine + 2 ATP + H2O = carbamoyl phosphate + L-glutamate + 2 ADP + phosphate + 2 H(+). It catalyses the reaction L-glutamine + H2O = L-glutamate + NH4(+). It functions in the pathway amino-acid biosynthesis; L-arginine biosynthesis; carbamoyl phosphate from bicarbonate: step 1/1. It participates in pyrimidine metabolism; UMP biosynthesis via de novo pathway; (S)-dihydroorotate from bicarbonate: step 1/3. Small subunit of the glutamine-dependent carbamoyl phosphate synthetase (CPSase). CPSase catalyzes the formation of carbamoyl phosphate from the ammonia moiety of glutamine, carbonate, and phosphate donated by ATP, constituting the first step of 2 biosynthetic pathways, one leading to arginine and/or urea and the other to pyrimidine nucleotides. The small subunit (glutamine amidotransferase) binds and cleaves glutamine to supply the large subunit with the substrate ammonia. In Ralstonia nicotianae (strain ATCC BAA-1114 / GMI1000) (Ralstonia solanacearum), this protein is Carbamoyl phosphate synthase small chain.